We begin with the raw amino-acid sequence, 656 residues long: MSWQWRRRQWPSPLLLILIVLHLVSSSSAIDFLYNSFSSVTNRTDVILIEDSRVESTVISLINDSDPLSFGRVFYPQKLTIIPDPTRNPTRLSSFSTSFVFSILPDISTSPGFGLCFVLSNSTSPPNAISSQYFGLFTNATVRFNAPLLAVEFDTGRNSEVNDIDDNHVGIDLNNIESTTSVTAGYYDSVNGSFVRFNMRNGNNVRAWIDFDGPNFQINVSVAPVGVLRPRRPTLTFRDPVIANYVSADMYAGFSASKTNWNEARRILAWSLSDTGALREINTTNLPVFFLENSSSSLSTGAIAGIVIGCVVFVALIGFGGYLIWKKLMREEEEEEIEEWELEFWPHRFSYEELAAATEVFSNDRLLGSGGFGKVYRGILSNNSEIAVKCVNHDSKQGLREFMAEISSMGRLQHKNLVQMRGWCRRKNELMLVYDYMPNGSLNQWIFDNPKEPMPWRRRRQVINDVAEGLNYLHHGWDQVVIHRDIKSSNILLDSEMRGRLGDFGLAKLYEHGGAPNTTRVVGTLGYLAPELASASAPTEASDVYSFGVVVLEVVSGRRPIEYAEEEDMVLVDWVRDLYGGGRVVDAADERVRSECETMEEVELLLKLGLACCHPDPAKRPNMREIVSLLLGSPQEDLLTGLTPAAAAADSTAAHA.

Residues 1 to 29 form the signal peptide; it reads MSWQWRRRQWPSPLLLILIVLHLVSSSSA. Residues 30-273 form a legume-lectin like region; sequence IDFLYNSFSS…ARRILAWSLS (244 aa). The Extracellular segment spans residues 30–304; it reads IDFLYNSFSS…SSSLSTGAIA (275 aa). N-linked (GlcNAc...) asparagine glycosylation is found at asparagine 42, asparagine 63, asparagine 121, asparagine 139, asparagine 191, asparagine 219, asparagine 282, and asparagine 293. Residues 305–325 traverse the membrane as a helical segment; it reads GIVIGCVVFVALIGFGGYLIW. Topologically, residues 326–656 are cytoplasmic; the sequence is KKLMREEEEE…AAADSTAAHA (331 aa). A Protein kinase domain is found at 361 to 639; the sequence is FSNDRLLGSG…LLGSPQEDLL (279 aa). ATP contacts are provided by residues 367 to 375 and lysine 389; that span reads LGSGGFGKV. The active-site Proton acceptor is the aspartate 485.

It in the C-terminal section; belongs to the protein kinase superfamily. Ser/Thr protein kinase family. In the N-terminal section; belongs to the leguminous lectin family.

It localises to the cell membrane. It carries out the reaction L-seryl-[protein] + ATP = O-phospho-L-seryl-[protein] + ADP + H(+). The catalysed reaction is L-threonyl-[protein] + ATP = O-phospho-L-threonyl-[protein] + ADP + H(+). In terms of biological role, involved in resistance response to the pathogenic oomycetes Phytophthora infestans and Phytophthora capsici and to the pathogenic bacteria Pseudomonas syringae. This is L-type lectin-domain containing receptor kinase S.1 from Arabidopsis thaliana (Mouse-ear cress).